Consider the following 156-residue polypeptide: MHCPFCSETDTKVIDSRLVADGAQVRRRRECLTCHDRFTTFETAELVMPRVIKQDGTREPFDEEKLRAGLQRALEKRPVSVEAIESSVQNVKHYLQALGEREVKSLMIGEKVMEELRSLDQVAYVRFASVYRSFQDLSEFQQEIDRLQKPKPSPIK.

Residues 3-34 (CPFCSETDTKVIDSRLVADGAQVRRRRECLTC) fold into a zinc finger. In terms of domain architecture, ATP-cone spans 49-139 (PRVIKQDGTR…VYRSFQDLSE (91 aa)).

Belongs to the NrdR family. It depends on Zn(2+) as a cofactor.

Its function is as follows. Negatively regulates transcription of bacterial ribonucleotide reductase nrd genes and operons by binding to NrdR-boxes. This is Transcriptional repressor NrdR from Saccharophagus degradans (strain 2-40 / ATCC 43961 / DSM 17024).